Reading from the N-terminus, the 611-residue chain is MIQVLLVTICLVVFPYQGSSIILESGKVNDYEVVYPQKIPVLPKSKIQRREQKMYEDTMKYEFKVNGEPVVLHLERNKELFSKDYTETHYSPDGREITTSPPVEDHCYYHGYIQSDIDSTAILNACNGLKGYFRHHGEAYHIEPLKFSDSEAHAVYKYENIEKEDETPKICGVKHSTWESDEPIEKISQKKDFLEEKKYLELYIVADYVMFRKYGRNVTTIRMRVFDMVNYITVVYKALNIHVALIGFEIWSLKDKFVINASTKNNLLHFSIWRSTVLRKRNDNAQLLTGVDLNGYTLGSAYLKAMCDVLQSVGIVQDYSKSPYLVGAAMAHEIGHNLGMEHDTKTCSCMRGNCIMSPEEEGSDFPMEFSSCSLYDFQNYMLTDTPQCLINKPSNTSIIKNAVCGNYVEEEGEECDCGSPEQCENNCCEAATCKLKPGAKCAKGACCKKCQFKKAGAECRAARNECDLPEFCIGQSAECPMDRFHKNGHSCQNDQGYCFRGYCPTLAKQCITLWGSDAKVAPDECFQNNTNGNEYDYCKKTNNVIIPCKPTDVKCGRLYCTGGTENPSEGEKISSDPCKASYSEIEDIGMVDHRTKCGEKMVCSDGKCIPL.

The signal sequence occupies residues 1–20 (MIQVLLVTICLVVFPYQGSS). Residues 21-187 (IILESGKVND…WESDEPIEKI (167 aa)) constitute a propeptide that is removed on maturation. The region spanning 198–393 (KYLELYIVAD…DTPQCLINKP (196 aa)) is the Peptidase M12B domain. 2 N-linked (GlcNAc...) asparagine glycosylation sites follow: N217 and N260. Disulfide bonds link C307–C388, C347–C372, and C349–C354. H332 serves as a coordination point for Zn(2+). E333 is an active-site residue. H336 and H342 together coordinate Zn(2+). N395 carries an N-linked (GlcNAc...) asparagine glycan. Residues 401–487 (NAVCGNYVEE…ECPMDRFHKN (87 aa)) enclose the Disintegrin domain. Disulfide bonds link C404-C433, C415-C428, C417-C423, C427-C450, C441-C447, C446-C472, C459-C479, C466-C498, C491-C503, C510-C560, C525-C578, C538-C548, C555-C603, and C597-C608. The D/ECD-tripeptide motif lies at 465–467 (ECD). An N-linked (GlcNAc...) asparagine glycan is attached at N528.

It belongs to the venom metalloproteinase (M12B) family. P-III subfamily. P-IIIa sub-subfamily. In terms of assembly, monomer. The cofactor is Zn(2+). Expressed by the venom gland.

The protein resides in the secreted. Its activity is regulated as follows. Inhibited by EDTA, but not by PMSF. Functionally, snake venom zinc metalloproteinase that has hemorrhagic activity. Inhibits ADP-, TMVA- and stejnulxin-induced platelet aggregation in a dose-dependent manner (on washed platelet, but not on platelet rich plasm). Also specifically degrades alpha-chain of fibrinogen (FGA). This Ophiophagus hannah (King cobra) protein is Zinc metalloproteinase-disintegrin-like ohanin.